The following is a 252-amino-acid chain: MANLGYWMLVLFVATWSDLGLCKKRPKPGGWNTGGSRYPGQGSPGGNRYPPQGGGWGQPHGGGWGQPHGGGWGQPHGGGWGQPHGGGWGQAGGTHNQWNKPSKPKTNMKHMAGAAAAGAVVGGLGGYMLGSAMSRPLIHFGNDYEDRYYRENMYRYPNQVYYRPVDQYNNQNNFVHDCVNITIKQHTVTTTTKGENLTETDVKMMERVVEQMCITQYERESQAYYQRGSSMVLFSSPPVILLISFLIFLIVG.

An N-terminal signal peptide occupies residues 1–22; the sequence is MANLGYWMLVLFVATWSDLGLC. The tract at residues 23–229 is interaction with GRB2, ERI3 and SYN1; that stretch reads KKRPKPGGWN…ESQAYYQRGS (207 aa). Residues 26-104 are disordered; that stretch reads PKPGGWNTGG…HNQWNKPSKP (79 aa). 5 tandem repeats follow at residues 51–58, 59–66, 67–74, 75–82, and 83–90. Positions 51 to 90 are 5 X 8 AA tandem repeats of P-H-G-G-G-W-G-Q; that stretch reads PQGGGWGQPHGGGWGQPHGGGWGQPHGGGWGQPHGGGWGQ. Residues 52–92 are compositionally biased toward gly residues; that stretch reads QGGGWGQPHGGGWGQPHGGGWGQPHGGGWGQPHGGGWGQAG. 12 residues coordinate Cu(2+): His-60, Gly-61, Gly-62, His-68, Gly-69, Gly-70, His-76, Gly-77, Gly-78, His-84, Gly-85, and Gly-86. The cysteines at positions 178 and 213 are disulfide-linked. N-linked (GlcNAc...) asparagine glycans are attached at residues Asn-180 and Asn-196. A lipid anchor (GPI-anchor amidated serine) is attached at Ser-229. Residues 230–252 constitute a propeptide, removed in mature form; that stretch reads SMVLFSSPPVILLISFLIFLIVG.

It belongs to the prion family. In terms of assembly, monomer and homodimer. Has a tendency to aggregate into amyloid fibrils containing a cross-beta spine, formed by a steric zipper of superposed beta-strands. Soluble oligomers may represent an intermediate stage on the path to fibril formation. Copper binding may promote oligomerization. Interacts with GRB2, APP, ERI3/PRNPIP and SYN1. Mislocalized cytosolically exposed PrP interacts with MGRN1; this interaction alters MGRN1 subcellular location and causes lysosomal enlargement. Interacts with KIAA1191.

The protein resides in the cell membrane. The protein localises to the golgi apparatus. Its primary physiological function is unclear. Has cytoprotective activity against internal or environmental stresses. May play a role in neuronal development and synaptic plasticity. May be required for neuronal myelin sheath maintenance. May play a role in iron uptake and iron homeostasis. Soluble oligomers are toxic to cultured neuroblastoma cells and induce apoptosis (in vitro). Association with GPC1 (via its heparan sulfate chains) targets PRNP to lipid rafts. Also provides Cu(2+) or Zn(2+) for the ascorbate-mediated GPC1 deaminase degradation of its heparan sulfate side chains. The protein is Major prion protein (PRNP) of Ateles paniscus (Black spider monkey).